The chain runs to 225 residues: Uracil-DNA glycosylase (225 aa).

The active-site Proton acceptor is Asp-65.

The protein belongs to the uracil-DNA glycosylase (UDG) superfamily. UNG family.

The protein resides in the cytoplasm. It carries out the reaction Hydrolyzes single-stranded DNA or mismatched double-stranded DNA and polynucleotides, releasing free uracil.. Excises uracil residues from the DNA which can arise as a result of misincorporation of dUMP residues by DNA polymerase or due to deamination of cytosine. This chain is Uracil-DNA glycosylase, found in Lysinibacillus sphaericus (strain C3-41).